A 943-amino-acid chain; its full sequence is Lactoferrin-binding protein A (943 aa).

Residues 1–27 (MNKKHGFPLTLTALAIATAFPAYAAQA) form the signal peptide. One can recognise a TBDR plug domain in the interval 52 to 178 (RRSKEATGLG…LGGAVAFRTK (127 aa)). The 755-residue stretch at 189-943 (SWGIQAKTAY…NFSLALEMKF (755 aa)) folds into the TBDR beta-barrel domain. The TonB C-terminal box motif lies at 926-943 (GRYAAPGRNFSLALEMKF).

The protein belongs to the TonB-dependent receptor family.

Its subcellular location is the cell outer membrane. Its function is as follows. Unknown. May be an iron-siderophore receptor. The protein is Lactoferrin-binding protein A (lbpA) of Neisseria meningitidis serogroup B (strain ATCC BAA-335 / MC58).